The following is an 844-amino-acid chain: Beta-mannosidase B (844 aa).

The Proton donor role is filled by Glu432. N-linked (GlcNAc...) asparagine glycosylation occurs at Asn723.

This sequence belongs to the glycosyl hydrolase 2 family. Beta-mannosidase B subfamily.

It carries out the reaction Hydrolysis of terminal, non-reducing beta-D-mannose residues in beta-D-mannosides.. It functions in the pathway glycan metabolism; N-glycan degradation. Functionally, exoglycosidase that cleaves the single beta-linked mannose residue from the non-reducing end of beta-mannosidic oligosaccharides of various complexity and length. Prefers mannobiose over mannotriose and has no activity against polymeric mannan. Is also severely restricted by galactosyl substitutions at the +1 subsite. The polypeptide is Beta-mannosidase B (mndB) (Aspergillus niger (strain ATCC MYA-4892 / CBS 513.88 / FGSC A1513)).